Reading from the N-terminus, the 238-residue chain is DNA repair protein RecO (238 aa).

The protein belongs to the RecO family.

Functionally, involved in DNA repair and RecF pathway recombination. The chain is DNA repair protein RecO from Cereibacter sphaeroides (strain ATCC 17023 / DSM 158 / JCM 6121 / CCUG 31486 / LMG 2827 / NBRC 12203 / NCIMB 8253 / ATH 2.4.1.) (Rhodobacter sphaeroides).